Here is a 226-residue protein sequence, read N- to C-terminus: Clarin-3 (226 aa).

The helical transmembrane segment at 8–28 (LMFLSSFFTSLGSFIVICSIL) threads the bilayer. Asparagine 83 carries an N-linked (GlcNAc...) asparagine glycan. Helical transmembrane passes span 92–112 (VTIL…GFTF), 129–149 (VYTW…LFVA), and 181–201 (FWLI…IIFY).

Belongs to the clarin family.

The protein resides in the membrane. The protein is Clarin-3 (CLRN3) of Homo sapiens (Human).